Reading from the N-terminus, the 98-residue chain is Large ribosomal subunit protein uL23 (98 aa).

Belongs to the universal ribosomal protein uL23 family. Part of the 50S ribosomal subunit. Contacts protein L29, and trigger factor when it is bound to the ribosome.

In terms of biological role, one of the early assembly proteins it binds 23S rRNA. One of the proteins that surrounds the polypeptide exit tunnel on the outside of the ribosome. Forms the main docking site for trigger factor binding to the ribosome. The sequence is that of Large ribosomal subunit protein uL23 from Jannaschia sp. (strain CCS1).